A 291-amino-acid polypeptide reads, in one-letter code: Ribonuclease Z (291 aa).

7 residues coordinate Zn(2+): H61, H63, D65, H66, H133, D201, and H257. D65 serves as the catalytic Proton acceptor.

It belongs to the RNase Z family. As to quaternary structure, homodimer. Requires Zn(2+) as cofactor.

It carries out the reaction Endonucleolytic cleavage of RNA, removing extra 3' nucleotides from tRNA precursor, generating 3' termini of tRNAs. A 3'-hydroxy group is left at the tRNA terminus and a 5'-phosphoryl group is left at the trailer molecule.. Functionally, zinc phosphodiesterase, which displays some tRNA 3'-processing endonuclease activity. Probably involved in tRNA maturation, by removing a 3'-trailer from precursor tRNA. This is Ribonuclease Z from Saccharolobus islandicus (strain L.S.2.15 / Lassen #1) (Sulfolobus islandicus).